The chain runs to 381 residues: Cyclic AMP-AMP-GMP synthase (381 aa).

Gln-51, Ser-53, Arg-56, Asp-69, Asp-71, and Arg-109 together coordinate ATP. Residues Asp-69 and Asp-71 contribute to the active site. Residues Asp-69 and Asp-71 each contribute to the Mg(2+) site. Residue Asp-121 is part of the active site. Mg(2+) contacts are provided by Asp-121 and Asp-196. Positions 196, 197, 204, 205, 210, 233, and 250 each coordinate ATP. Asn-258 and Leu-260 together coordinate Mg(2+). The ATP site is built by Val-304 and Arg-307. The disordered stretch occupies residues 348 to 381 (GSKFPLPGPQGGDRNGGFTTPSKPAEPQKTGRFA).

This sequence belongs to the CD-NTase family. D02 subfamily. As to quaternary structure, monomer. Crystallizes as a Cap2 homodimer bound on each side by a CdnD monomer. The cofactor is Mg(2+). In bacteria expressing cap4-dncV-cap2-cap3, this protein is conjugated to a number of other proteins by Cap2, probably via this protein's C-terminal Ala residue. More conjugated DncV is found in the absence of Cap3.

It catalyses the reaction GTP + 2 ATP = 3',3',3'-cAAG + 3 diphosphate. Its activity is regulated as follows. Primed for activation by Cap2 which conjugates it to cellular proteins; activation is target protein-specific (green fluorescent protein does not activate the enzyme), but which protein(s) activate it is unclear. Functionally, cyclic nucleotide synthase (second messenger synthase) of a CBASS antivirus system. CBASS (cyclic oligonucleotide-based antiphage signaling system) provides immunity against bacteriophages. The CD-NTase protein (CdnD, this protein) synthesizes cyclic nucleotides in response to infection; these serve as specific second messenger signals. The signals activate a diverse range of effectors, leading to bacterial cell death and thus abortive phage infection. A type II-C(AAG) CBASS system. In terms of biological role, cyclic trinucleotide synthase that catalyzes the synthesis of 3',3',3'-cyclic AMP-AMP-GMP (cAAG) as the major product, a second messenger for cell signal transduction. Uses ATP as the first donor nucleotide, followed by GTP. Its function is as follows. Protects E.coli against phage T2 infection. When the cdnD-cap2-cap3-cap4 operon is introduced in E.coli there is a more than 10(3) decrease in the efficiency of T2 plaque formation. The operon does not protect against phage T5 and only about 10-fold against T7. Expression of cdnD-cap4 alone protects E.coli against phage T2 infection. The polypeptide is Cyclic AMP-AMP-GMP synthase (Enterobacter hormaechei subsp. hoffmannii (strain UCI 50)).